A 151-amino-acid chain; its full sequence is Nucleoside diphosphate kinase (151 aa).

The ATP site is built by K10, F58, R86, T92, R103, and N113. Residue H116 is the Pros-phosphohistidine intermediate of the active site.

It belongs to the NDK family. As to quaternary structure, homotetramer. Mg(2+) serves as cofactor.

The protein resides in the cytoplasm. The catalysed reaction is dZDP + ATP = dZTP + ADP. It carries out the reaction a 2'-deoxyribonucleoside 5'-diphosphate + ATP = a 2'-deoxyribonucleoside 5'-triphosphate + ADP. The enzyme catalyses a ribonucleoside 5'-diphosphate + ATP = a ribonucleoside 5'-triphosphate + ADP. The protein operates within purine metabolism. Major role in the synthesis of nucleoside triphosphates other than ATP. The ATP gamma phosphate is transferred to the NDP beta phosphate via a ping-pong mechanism, using a phosphorylated active-site intermediate. In terms of biological role, (Microbial infection) Catalyzes the phosphorylation of dZDP to dZTP, when the bacterium is infected by a phage that produces the substrate for the synthesis of dZTP (2- amino-2'-deoxyadenosine 5'-triphosphate), which is then used by the phage as a DNA polymerase substrate. This chain is Nucleoside diphosphate kinase, found in Synechococcus sp. (strain CC9605).